Reading from the N-terminus, the 815-residue chain is Protein-glutamine gamma-glutamyltransferase K (815 aa).

The segment covering 1–10 has biased composition (basic and acidic residues); that stretch reads MEGPRSDVGR. Disordered regions lie at residues 1–48 and 62–101; these read MEGP…SFWA and DDWGPEPSGSRSRGTSSRGRDSRGGRRPESRGSGVNAAGD. The span at 16 to 25 shows a compositional bias: pro residues; the sequence is WQPPTTPSPE. Thr-21 bears the Phosphothreonine mark. A phosphoserine mark is found at Ser-23, Ser-71, Ser-83, Ser-91, and Ser-94. Positions 66–78 are enriched in low complexity; the sequence is PEPSGSRSRGTSS. Positions 79–91 are enriched in basic and acidic residues; sequence RGRDSRGGRRPES. Active-site residues include Cys-376, His-435, and Asp-458. The Ca(2+) site is built by Asn-498, Asp-500, Glu-547, and Glu-552. Residues 791–815 form a disordered region; sequence GSGFSDAGGDSRSGENIPMAYRGGA. Residue Ser-803 is modified to Phosphoserine.

This sequence belongs to the transglutaminase superfamily. Transglutaminase family. In terms of assembly, interacts with PLAAT4. Ca(2+) serves as cofactor. Tyrosine-phosphorylated. In terms of processing, palmitoylated. Post-translationally, the membrane anchorage region possesses a cluster of five cysteines within which fatty acid(s) may become thioester-linked. It is subject to phorbol ester-stimulated phosphorylation and is hypersensitive to proteolysis, which releases the enzyme in a soluble form. Expressed in large amounts in epithelial tissues (lung, liver and kidney).

It is found in the membrane. The enzyme catalyses L-glutaminyl-[protein] + L-lysyl-[protein] = [protein]-L-lysyl-N(6)-5-L-glutamyl-[protein] + NH4(+). Catalyzes the cross-linking of proteins and the conjugation of polyamines to proteins. Responsible for cross-linking epidermal proteins during formation of the stratum corneum. Involved in cell proliferation. This is Protein-glutamine gamma-glutamyltransferase K (Tgm1) from Mus musculus (Mouse).